The sequence spans 130 residues: 3-aminoacrylate deaminase RutC (130 aa).

It belongs to the RutC family.

It carries out the reaction (Z)-3-aminoacrylate + H2O + H(+) = 3-oxopropanoate + NH4(+). Functionally, involved in pyrimidine catabolism. Catalyzes the deamination of 3-aminoacrylate to malonic semialdehyde, a reaction that can also occur spontaneously. RutC may facilitate the reaction and modulate the metabolic fitness, rather than catalyzing essential functions. The polypeptide is 3-aminoacrylate deaminase RutC (Klebsiella variicola (strain At-22)).